The sequence spans 363 residues: Methylthioribose-1-phosphate isomerase (363 aa).

Residue D253 is the Proton donor of the active site.

This sequence belongs to the eIF-2B alpha/beta/delta subunits family. MtnA subfamily.

It is found in the cytoplasm. The protein localises to the nucleus. The catalysed reaction is 5-(methylsulfanyl)-alpha-D-ribose 1-phosphate = 5-(methylsulfanyl)-D-ribulose 1-phosphate. It functions in the pathway amino-acid biosynthesis; L-methionine biosynthesis via salvage pathway; L-methionine from S-methyl-5-thio-alpha-D-ribose 1-phosphate: step 1/6. Its function is as follows. Catalyzes the interconversion of methylthioribose-1-phosphate (MTR-1-P) into methylthioribulose-1-phosphate (MTRu-1-P). This chain is Methylthioribose-1-phosphate isomerase, found in Drosophila grimshawi (Hawaiian fruit fly).